The primary structure comprises 607 residues: Elongation factor 4 (607 aa).

The region spanning Glu-11–Gln-193 is the tr-type G domain. GTP contacts are provided by residues Asp-23–Thr-28 and Asn-140–Asp-143.

This sequence belongs to the TRAFAC class translation factor GTPase superfamily. Classic translation factor GTPase family. LepA subfamily.

It localises to the cell membrane. The catalysed reaction is GTP + H2O = GDP + phosphate + H(+). Its function is as follows. Required for accurate and efficient protein synthesis under certain stress conditions. May act as a fidelity factor of the translation reaction, by catalyzing a one-codon backward translocation of tRNAs on improperly translocated ribosomes. Back-translocation proceeds from a post-translocation (POST) complex to a pre-translocation (PRE) complex, thus giving elongation factor G a second chance to translocate the tRNAs correctly. Binds to ribosomes in a GTP-dependent manner. The sequence is that of Elongation factor 4 from Lactococcus lactis subsp. cremoris (strain MG1363).